Here is a 464-residue protein sequence, read N- to C-terminus: Transcription factor EAT1 (464 aa).

Residues 261–274 are basic motif; degenerate; sequence GKGKANFATERERR. Residues 261–310 enclose the bHLH domain; it reads GKGKANFATERERREQLNVKFRTLRMLFPNPTKNDRASIVGDAIEYIDEL. Residues 275–310 are helix-loop-helix motif; it reads EQLNVKFRTLRMLFPNPTKNDRASIVGDAIEYIDEL. Residues 338-357 form a disordered region; sequence QEAAADGESSSMRPVRDDQD.

This sequence belongs to the bHLH protein family. As to quaternary structure, interacts with TDR.

It localises to the nucleus. In terms of biological role, transcription factor involved in the regulation of tapetum programmed cell death (PCD) and degradation during male reproductive development. Interacts with TDR and promote tapetal PCD by regulating the expression of RTS, and the two lipid-transfer proteins C4 and C6, which function in microspore development. Acts downstream from and interacts with TDR in the regulation of tapetal PCD. Regulates directly the aspartic protease AP25 and AP37 during tapetal PCD. May not target the cysteine protease CP1. The polypeptide is Transcription factor EAT1 (Oryza sativa subsp. japonica (Rice)).